The chain runs to 706 residues: ATP-dependent zinc metalloprotease FtsH (706 aa).

A compositionally biased stretch (polar residues) spans 1–17; the sequence is MAKNSLKPSNPYNSEPE. The disordered stretch occupies residues 1 to 20; it reads MAKNSLKPSNPYNSEPETPQ. The Cytoplasmic portion of the chain corresponds to 1 to 24; that stretch reads MAKNSLKPSNPYNSEPETPQPRPK. The chain crosses the membrane as a helical span at residues 25–45; the sequence is LPMIYYVVVIALLIGLQLAFF. At 46-142 the chain is on the periplasmic side; that stretch reads WSGSSREIPY…RYEGSPGTTW (97 aa). The tract at residues 88-111 is disordered; that stretch reads GLPKQEEGNDTTRKLLPGAKTPEN. A compositionally biased stretch (basic and acidic residues) spans 91-100; sequence KQEEGNDTTR. Residues 143–163 traverse the membrane as a helical segment; sequence ISELIQWVLPFALLFGLYFFI. Topologically, residues 164–706 are cytoplasmic; the sequence is FRRMGAGGPG…LRQSRNVSDN (543 aa). ATP is bound at residue 239–246; sequence GPPGTGKT. A Zn(2+)-binding site is contributed by histidine 462. Glutamate 463 is a catalytic residue. Positions 466 and 539 each coordinate Zn(2+). A disordered region spans residues 641–681; the sequence is RPGGQEEDSGEVDCSKKSAENGMVAHEPETTADAESTEKVG.

It in the central section; belongs to the AAA ATPase family. This sequence in the C-terminal section; belongs to the peptidase M41 family. In terms of assembly, homohexamer. Requires Zn(2+) as cofactor.

It is found in the cell inner membrane. Its function is as follows. Acts as a processive, ATP-dependent zinc metallopeptidase for both cytoplasmic and membrane proteins. Plays a role in the quality control of integral membrane proteins. The sequence is that of ATP-dependent zinc metalloprotease FtsH from Chlorobium luteolum (strain DSM 273 / BCRC 81028 / 2530) (Pelodictyon luteolum).